Consider the following 565-residue polypeptide: MAFNFNWSPLMADASFYTRAQDLLTAALNKSPKPPIIVDDIIVTELNLGSIPPELEILEIGDLAEDRFRGIFKMSYSGDAFLTLKTRVQANPLNTYLLTRPSFASPLPLAAATPLTIPLQITLSDFKLSGFVILVFSKQKGITVVFRNDPLESLKVSSTFDSIPFVRDFLQREIEAQLRILFMDELPAIIHRLSLRLWVPEYRAGEEDQDQNTNTAGEGPGQDPLASPPQDPVDALGNALNESEIASLSLDSSVETHSLFSQKNLLRLAALTDSQRTLSLFTPSIQEVVYRAWTSPSDQGDISGGVTSPLSPALSRTQSQVGGMSSFQDNASTISSYSRTSTSTHTFSTYGLNLGAGRHSKAHARKRKKRVVDLRRPKQPESETASVTDESSFTETTSAPSVRSAPLPRVNEQPDDPVTPPLSPDSDFHLPPIPERHRFSISRPALRRDIATEMLRETGESSSEPARRHAEVDDIDATPRTIIRHEPSRYEGEKQEAGPSRQLPSTILPFTEEKSTPGPVDQALVERIAGEIARRMREDKLMGTNSCAFWNRPGHEESPPPAYGQ.

Residues Met-1 to Leu-195 form the SMP-LTD domain. Disordered regions lie at residues Glu-207–Leu-236, Pro-296–Thr-317, and Ser-348–Pro-504. Over residues Arg-358–Arg-370 the composition is skewed to basic residues. Residues Val-371 to Glu-381 are compositionally biased toward basic and acidic residues. The span at Ser-382–Ser-401 shows a compositional bias: polar residues. Composition is skewed to basic and acidic residues over residues Leu-446 to Val-472 and Ile-483 to Glu-496.

The protein belongs to the MDM34 family. Component of the ER-mitochondria encounter structure (ERMES) or MDM complex, composed of mmm1, mdm10, mdm12 and mdm34.

The protein localises to the mitochondrion outer membrane. Component of the ERMES/MDM complex, which serves as a molecular tether to connect the endoplasmic reticulum (ER) and mitochondria. Components of this complex are involved in the control of mitochondrial shape and protein biogenesis, and function in nonvesicular lipid trafficking between the ER and mitochondria. Mdm34 is required for the interaction of the ER-resident membrane protein mmm1 and the outer mitochondrial membrane-resident beta-barrel protein mdm10. The protein is Mitochondrial distribution and morphology protein 34 of Aspergillus terreus (strain NIH 2624 / FGSC A1156).